Reading from the N-terminus, the 247-residue chain is Cell division protein ZapD (247 aa).

Belongs to the ZapD family. Interacts with FtsZ.

Its subcellular location is the cytoplasm. Its function is as follows. Cell division factor that enhances FtsZ-ring assembly. Directly interacts with FtsZ and promotes bundling of FtsZ protofilaments, with a reduction in FtsZ GTPase activity. The chain is Cell division protein ZapD from Shigella boydii serotype 18 (strain CDC 3083-94 / BS512).